We begin with the raw amino-acid sequence, 647 residues long: Chaperone protein HtpG (647 aa).

The segment at M1–R353 is a; substrate-binding. Residues E354–R567 are b. The segment at I568–L647 is c.

The protein belongs to the heat shock protein 90 family. Homodimer.

It localises to the cytoplasm. Molecular chaperone. Has ATPase activity. This chain is Chaperone protein HtpG, found in Mycobacterium bovis (strain ATCC BAA-935 / AF2122/97).